We begin with the raw amino-acid sequence, 87 residues long: Putative regulatory protein ABC2323 (87 aa).

Belongs to the RemA family.

The protein is Putative regulatory protein ABC2323 of Shouchella clausii (strain KSM-K16) (Alkalihalobacillus clausii).